We begin with the raw amino-acid sequence, 144 residues long: Large ribosomal subunit protein uL15 (144 aa).

Residues 1–49 (MRLNTLSPAAGAKSAAKRVGRGIGSGTGKTCGRGHKGQKSRSGGGVRVG) are disordered. The segment covering 21-31 (RGIGSGTGKTC) has biased composition (gly residues).

The protein belongs to the universal ribosomal protein uL15 family. Part of the 50S ribosomal subunit.

In terms of biological role, binds to the 23S rRNA. The polypeptide is Large ribosomal subunit protein uL15 (Shewanella sediminis (strain HAW-EB3)).